We begin with the raw amino-acid sequence, 133 residues long: Ribosome-binding factor A (133 aa).

It belongs to the RbfA family. In terms of assembly, monomer. Binds 30S ribosomal subunits, but not 50S ribosomal subunits or 70S ribosomes.

The protein localises to the cytoplasm. One of several proteins that assist in the late maturation steps of the functional core of the 30S ribosomal subunit. Associates with free 30S ribosomal subunits (but not with 30S subunits that are part of 70S ribosomes or polysomes). Required for efficient processing of 16S rRNA. May interact with the 5'-terminal helix region of 16S rRNA. The polypeptide is Ribosome-binding factor A (Bordetella bronchiseptica (strain ATCC BAA-588 / NCTC 13252 / RB50) (Alcaligenes bronchisepticus)).